A 146-amino-acid polypeptide reads, in one-letter code: Prefoldin subunit alpha 1 (146 aa).

This sequence belongs to the prefoldin subunit alpha family. In terms of assembly, heterohexamer of two alpha and four beta subunits.

The protein resides in the cytoplasm. Molecular chaperone capable of stabilizing a range of proteins. Seems to fulfill an ATP-independent, HSP70-like function in archaeal de novo protein folding. The sequence is that of Prefoldin subunit alpha 1 from Thermococcus kodakarensis (strain ATCC BAA-918 / JCM 12380 / KOD1) (Pyrococcus kodakaraensis (strain KOD1)).